The chain runs to 407 residues: Membrane protein MosC (407 aa).

Residues 1–24 (MTRTSPRHHAPSETKRRVPMGGVH) are disordered. 11 helical membrane-spanning segments follow: residues 31–51 (LTITAVAFQFFINGLVLAAWA), 69–89 (GVLLLIMAAGALLFMSLAGYF), 109–129 (ALVLIFAAPNCMTFLCSIVLF), 157–177 (AFLHGCSSTGILAGIMTFGVI), 186–206 (SVTLLTGILIVARWLFPHLLD), 225–245 (LLMFGILSFLTMVTDGAIAEW), 255–275 (QVTDQVGSLGYVAFTLLMIAG), 290–310 (ALIAISGSLASAGMTTALFMP), 316–336 (LAGFALLGLGMANLVPIIFSE), 347–367 (VGLTFVSVCGYSGFLVGPPII), and 377–397 (GRALLFIIAVGVIVACASVFF).

It localises to the cell membrane. Its function is as follows. May be a membrane transport protein that could either transport a precursor for rhizopine biosynthesis into bacteroids or the finished product from the bacteroids. In Rhizobium meliloti (Ensifer meliloti), this protein is Membrane protein MosC (mosC).